Here is a 271-residue protein sequence, read N- to C-terminus: MEQHHQYLAHPHSSEEIRTEDYIAGLAKGLALLEAFGIDRQRLNVTQVAERTGISRTAARRYLKTLKFLGYLDTDEHYFWLTHRVLRFSSSYLSSAHLPKVAQSFLNLLCAQTSLTFSIVVLDEHEVVPVARSYLPQQDNLRVSPYGMHLGNRLPAHATSTGKVLLSVLDREVQIEWIEKYGLKRLTPYTITDEHTFLETLDAVRQSDYCLSTEEHELGLIAIAVPVLNAQGLTIAALNCMSQTNRVQPQYLIDQVLPLLRNTANELRNLV.

An HTH iclR-type domain is found at 23 to 83; sequence IAGLAKGLAL…TDEHYFWLTH (61 aa). A DNA-binding region (H-T-H motif) is located at residues 45-64; the sequence is VTQVAERTGISRTAARRYLK. The region spanning 98–271 is the IclR-ED domain; the sequence is LPKVAQSFLN…NTANELRNLV (174 aa).

Its function is as follows. Positive regulator of the pobA gene for p-hydroxybenzoate hydroxylase. The polypeptide is p-hydroxybenzoate hydroxylase transcriptional activator (pobR) (Acinetobacter baylyi (strain ATCC 33305 / BD413 / ADP1)).